Here is a 453-residue protein sequence, read N- to C-terminus: Glutamyl-tRNA(Gln) amidotransferase subunit A (453 aa).

Residues Lys-56 and Ser-131 each act as charge relay system in the active site. The active-site Acyl-ester intermediate is the Ser-155.

Belongs to the amidase family. GatA subfamily. Heterotrimer of A, B and C subunits.

It catalyses the reaction L-glutamyl-tRNA(Gln) + L-glutamine + ATP + H2O = L-glutaminyl-tRNA(Gln) + L-glutamate + ADP + phosphate + H(+). Functionally, allows the formation of correctly charged Gln-tRNA(Gln) through the transamidation of misacylated Glu-tRNA(Gln) in organisms which lack glutaminyl-tRNA synthetase. The reaction takes place in the presence of glutamine and ATP through an activated gamma-phospho-Glu-tRNA(Gln). The chain is Glutamyl-tRNA(Gln) amidotransferase subunit A from Campylobacter jejuni subsp. jejuni serotype O:6 (strain 81116 / NCTC 11828).